We begin with the raw amino-acid sequence, 31 residues long: Unknown protein from spot 104 of 2D-PAGE of thylakoid (31 aa).

It localises to the plastid. Its subcellular location is the chloroplast thylakoid. The chain is Unknown protein from spot 104 of 2D-PAGE of thylakoid from Pisum sativum (Garden pea).